The sequence spans 249 residues: tRNA (guanine-N(1)-)-methyltransferase (249 aa).

S-adenosyl-L-methionine is bound by residues Gly-121 and 141–146 (LGDFVL).

This sequence belongs to the RNA methyltransferase TrmD family. In terms of assembly, homodimer.

The protein resides in the cytoplasm. The catalysed reaction is guanosine(37) in tRNA + S-adenosyl-L-methionine = N(1)-methylguanosine(37) in tRNA + S-adenosyl-L-homocysteine + H(+). Specifically methylates guanosine-37 in various tRNAs. The protein is tRNA (guanine-N(1)-)-methyltransferase of Cereibacter sphaeroides (strain KD131 / KCTC 12085) (Rhodobacter sphaeroides).